A 314-amino-acid chain; its full sequence is Olfactory receptor 5P76 (314 aa).

Residues 1–28 (MAFLEDGNHTAVTGFILLGLTDDPVLRV) lie on the Extracellular side of the membrane. Residue N8 is glycosylated (N-linked (GlcNAc...) asparagine). The chain crosses the membrane as a helical span at residues 29 to 49 (VLFVIILCIYLVTVSGNLSTI). Residues 50–57 (LLIRVSSQ) lie on the Cytoplasmic side of the membrane. Residues 58 to 78 (LHHPMYFFLSHLASADIGYSS) form a helical membrane-spanning segment. At 79–102 (SVTPNMLVNFLVERNTISYLGCGI) the chain is on the extracellular side. C100 and C192 are oxidised to a cystine. The chain crosses the membrane as a helical span at residues 103 to 123 (QLGSAVFFGTVECFLLAAMAY). Residues 124–136 (DRFIAICSPLLYS) lie on the Cytoplasmic side of the membrane. The helical transmembrane segment at 137-157 (NKMSTQVCVQLLVGSYIGGFL) threads the bilayer. The Extracellular segment spans residues 158 to 199 (NASSFTLSFFSLVFCGPNRVNHFFCDFAPLVKLSCSDVSVPA). The chain crosses the membrane as a helical span at residues 200-220 (VVPSFTAGSIIIVTIFVIAVS). Topologically, residues 221–240 (YIYILITILKMRSTEGRQKA) are cytoplasmic. The chain crosses the membrane as a helical span at residues 241–261 (FSTCTSHLTAVTLFYGTITFI). The Extracellular portion of the chain corresponds to 262–274 (YVMPKSSYSTDQN). A helical membrane pass occupies residues 275 to 295 (KVVSVFYMVVVPMLNPLIYSL). The Cytoplasmic segment spans residues 296 to 314 (RNKEIKGALKRQLAKNTFS).

It belongs to the G-protein coupled receptor 1 family.

The protein resides in the cell membrane. In terms of biological role, potential odorant receptor. The protein is Olfactory receptor 5P76 of Mus musculus (Mouse).